Here is a 152-residue protein sequence, read N- to C-terminus: Ribosome maturation factor RimP (152 aa).

This sequence belongs to the RimP family.

Its subcellular location is the cytoplasm. Functionally, required for maturation of 30S ribosomal subunits. In Paraburkholderia phymatum (strain DSM 17167 / CIP 108236 / LMG 21445 / STM815) (Burkholderia phymatum), this protein is Ribosome maturation factor RimP.